The following is a 370-amino-acid chain: Pyrimidine monooxygenase RutA (370 aa).

Residues 49 to 50 (IK), Asn-115, Glu-124, 140 to 141 (RY), and Ser-190 each bind FMN.

The protein belongs to the NtaA/SnaA/DszA monooxygenase family. RutA subfamily.

It carries out the reaction uracil + FMNH2 + NADH + O2 = (Z)-3-ureidoacrylate + FMN + NAD(+) + H2O + H(+). The catalysed reaction is thymine + FMNH2 + NADH + O2 = (Z)-2-methylureidoacrylate + FMN + NAD(+) + H2O + H(+). Catalyzes the pyrimidine ring opening between N-3 and C-4 by an unusual flavin hydroperoxide-catalyzed mechanism, adding oxygen atoms in the process to yield ureidoacrylate peracid, that immediately reacts with FMN forming ureidoacrylate and FMN-N(5)-oxide. The FMN-N(5)-oxide reacts spontaneously with NADH to produce FMN. Requires the flavin reductase RutF to regenerate FMN in vivo. The chain is Pyrimidine monooxygenase RutA from Variovorax paradoxus (strain S110).